Reading from the N-terminus, the 309-residue chain is DSC E3 ubiquitin ligase complex subunit C (309 aa).

The N-linked (GlcNAc...) asparagine glycan is linked to asparagine 61. Disordered stretches follow at residues 88-110 and 148-177; these read LPPSPSRTPVVQEDATTVKGKGK and EQADEDYTGRKKQQQPPPSTTSAPRGFDRL. The next 2 membrane-spanning stretches (helical) occupy residues 257 to 277 and 289 to 309; these read DDMLWGAVMGFFWPVGCAMWL and GLAVFVGVVINVAFGAMRIMN.

The protein belongs to the dsc3 family. Component of the DSC E3 ubiquitin ligase complex composed of dscA, dscB, dscC and dscD.

Its subcellular location is the endoplasmic reticulum membrane. The protein operates within protein modification; protein ubiquitination. In terms of biological role, component of the DSC E3 ubiquitin ligase complex which is required for the srbA transcriptional activator proteolytic cleavage to release the soluble transcription factor from the membrane in low oxygen or sterol conditions. Required for growth during hypoxia and triazole drug susceptibility, as well as for virulence in a murine model of invasive pulmonary aspergillosis (IPA). This chain is DSC E3 ubiquitin ligase complex subunit C, found in Aspergillus fumigatus (strain ATCC MYA-4609 / CBS 101355 / FGSC A1100 / Af293) (Neosartorya fumigata).